Reading from the N-terminus, the 604-residue chain is Glucose oxidase (604 aa).

Positions 1–18 (MKSTIITSILFSVATVQA) are cleaved as a signal peptide. FAD contacts are provided by Leu-52, Thr-53, and Glu-73. A glycan (N-linked (GlcNAc...) asparagine) is linked at Asn-111. FAD is bound by residues Ser-125, Asn-129, Gly-130, and Ser-132. Cysteines 186 and 228 form a disulfide. Asn-213 carries an N-linked (GlcNAc...) asparagine glycan. Residue Val-272 coordinates FAD. Residues Asn-278, Asn-409, and Asn-531 are each glycosylated (N-linked (GlcNAc...) asparagine). The Proton acceptor role is filled by His-537. Positions 558 and 559 each coordinate O2. The FAD site is built by Gly-570 and Met-582.

Belongs to the GMC oxidoreductase family. In terms of assembly, homodimer. FAD serves as cofactor.

The protein localises to the secreted. Its subcellular location is the cell wall. It is found in the cytoplasm. The protein resides in the extracellular space. It localises to the extracellular matrix. The enzyme catalyses beta-D-glucose + O2 = D-glucono-1,5-lactone + H2O2. Functionally, glucose oxidase catalyzes the oxidation of beta-D-glucose to D-glucono-delta-lactone and hydrogen peroxide in the presence of molecular oxygen. The enzyme also catalyzes the reaction with D-xylose but at a much lower rate. Shows any activities against D-fructose, D-galactose and D-arabinose. The enzyme is cytotoxic for a series of bacteria, yeasts and filamentous fungi and acts primarily via the liberation of H(2)O(2), which is a harmful oxidative stress-generating agent. This Penicillium chrysogenum (Penicillium notatum) protein is Glucose oxidase.